A 127-amino-acid chain; its full sequence is uncharacterized protein (127 aa).

Over residues 1–17 the composition is skewed to polar residues; it reads MQGSVQIQKGNISSSYT. The interval 1 to 36 is disordered; that stretch reads MQGSVQIQKGNISSSYTPEKHPSHPTSANGSMSPKR.

This is an uncharacterized protein from Treponema pallidum (strain Nichols).